A 458-amino-acid chain; its full sequence is Cobyrinate a,c-diamide synthase (458 aa).

The GATase cobBQ-type domain maps to 254-445; the sequence is KIGVIRDQVF…IHVHFLSDKS (192 aa). Cysteine 335 serves as the catalytic Nucleophile.

The protein belongs to the CobB/CbiA family. Mg(2+) is required as a cofactor.

It catalyses the reaction cob(II)yrinate + 2 L-glutamine + 2 ATP + 2 H2O = cob(II)yrinate a,c diamide + 2 L-glutamate + 2 ADP + 2 phosphate + 2 H(+). It functions in the pathway cofactor biosynthesis; adenosylcobalamin biosynthesis; cob(II)yrinate a,c-diamide from sirohydrochlorin (anaerobic route): step 10/10. Functionally, catalyzes the ATP-dependent amidation of the two carboxylate groups at positions a and c of cobyrinate, using either L-glutamine or ammonia as the nitrogen source. This is Cobyrinate a,c-diamide synthase from Archaeoglobus fulgidus (strain ATCC 49558 / DSM 4304 / JCM 9628 / NBRC 100126 / VC-16).